Consider the following 315-residue polypeptide: Methionyl-tRNA formyltransferase (315 aa).

(6S)-5,6,7,8-tetrahydrofolate is bound at residue 113-116 (SLLP).

This sequence belongs to the Fmt family.

It catalyses the reaction L-methionyl-tRNA(fMet) + (6R)-10-formyltetrahydrofolate = N-formyl-L-methionyl-tRNA(fMet) + (6S)-5,6,7,8-tetrahydrofolate + H(+). Its function is as follows. Attaches a formyl group to the free amino group of methionyl-tRNA(fMet). The formyl group appears to play a dual role in the initiator identity of N-formylmethionyl-tRNA by promoting its recognition by IF2 and preventing the misappropriation of this tRNA by the elongation apparatus. This Escherichia coli (strain SE11) protein is Methionyl-tRNA formyltransferase.